A 701-amino-acid chain; its full sequence is F-box/LRR-repeat protein 17 (701 aa).

The span at 1–11 shows a compositional bias: basic and acidic residues; it reads MGHLLSKEPRN. Disordered stretches follow at residues 1-20, 72-94, and 227-300; these read MGHL…RPRC, APAG…YAAA, and GGGG…DADC. Positions 227-237 are enriched in gly residues; sequence GGGGGPAGGGA. Positions 252–264 are enriched in pro residues; sequence EQPPQPLCPPPSS. Positions 318-365 constitute an F-box domain; it reads TPDINQLPPSILLKIFSNLSLDERCLSASLVCKYWRDLCLDFQFWKQL.

It belongs to the FBXL17 family. Part of the SCF (SKP1-CUL1-F-box) E3 ubiquitin-protein ligase complex SCF(FBXL17) composed of CUL1, SKP1, RBX1 and FBXL17. Interacts with BTB domain-containing proteins such as KLHL12, BCL6 and BACH1; specifically recognizes and binds a conserved degron of non-consecutive residues present at the interface of BTB dimers of aberrant composition. Interacts with SUFU. Interacts with PRMT1.

The protein resides in the cytoplasm. The protein localises to the nucleus. In terms of biological role, substrate-recognition component of the SCF(FBXL17) E3 ubiquitin ligase complex, a key component of a quality control pathway required to ensure functional dimerization of BTB domain-containing proteins (dimerization quality control, DQC). FBXL17 specifically recognizes and binds a conserved degron of non-consecutive residues present at the interface of BTB dimers of aberrant composition: aberrant BTB dimer are then ubiquitinated by the SCF(FBXL17) complex and degraded by the proteasome. The ability of the SCF(FBXL17) complex to eliminate compromised BTB dimers is required for the differentiation and survival of neural crest and neuronal cells. The SCF(FBXL17) complex mediates ubiquitination and degradation of BACH1. The SCF(FBXL17) complex is also involved in the regulation of the hedgehog/smoothened (Hh) signaling pathway by mediating the ubiquitination and degradation of SUFU, allowing the release of GLI1 from SUFU for proper Hh signal transduction. The SCF(FBXL17) complex mediates ubiquitination and degradation of PRMT1. The protein is F-box/LRR-repeat protein 17 of Homo sapiens (Human).